The chain runs to 117 residues: Large ribosomal subunit protein uL18 (117 aa).

Belongs to the universal ribosomal protein uL18 family. Part of the 50S ribosomal subunit; part of the 5S rRNA/L5/L18/L25 subcomplex. Contacts the 5S and 23S rRNAs.

Its function is as follows. This is one of the proteins that bind and probably mediate the attachment of the 5S RNA into the large ribosomal subunit, where it forms part of the central protuberance. The sequence is that of Large ribosomal subunit protein uL18 from Polynucleobacter asymbioticus (strain DSM 18221 / CIP 109841 / QLW-P1DMWA-1) (Polynucleobacter necessarius subsp. asymbioticus).